A 276-amino-acid polypeptide reads, in one-letter code: NH(3)-dependent NAD(+) synthetase (276 aa).

43–50 (GISGGVDS) is an ATP binding site. Asp49 contacts Mg(2+). Arg146 is a binding site for deamido-NAD(+). Thr166 contributes to the ATP binding site. Residue Glu171 participates in Mg(2+) binding. 2 residues coordinate deamido-NAD(+): Lys179 and Asp186. ATP contacts are provided by Lys195 and Thr217. Deamido-NAD(+) is bound at residue 266–267 (HK).

This sequence belongs to the NAD synthetase family. As to quaternary structure, homodimer.

It carries out the reaction deamido-NAD(+) + NH4(+) + ATP = AMP + diphosphate + NAD(+) + H(+). Its pathway is cofactor biosynthesis; NAD(+) biosynthesis; NAD(+) from deamido-NAD(+) (ammonia route): step 1/1. Its function is as follows. Catalyzes the ATP-dependent amidation of deamido-NAD to form NAD. Uses ammonia as a nitrogen source. This Shewanella baltica (strain OS185) protein is NH(3)-dependent NAD(+) synthetase.